We begin with the raw amino-acid sequence, 1070 residues long: DNA-directed RNA polymerase subunit beta (1070 aa).

This sequence belongs to the RNA polymerase beta chain family. As to quaternary structure, in plastids the minimal PEP RNA polymerase catalytic core is composed of four subunits: alpha, beta, beta', and beta''. When a (nuclear-encoded) sigma factor is associated with the core the holoenzyme is formed, which can initiate transcription.

The protein localises to the plastid. It localises to the chloroplast. The enzyme catalyses RNA(n) + a ribonucleoside 5'-triphosphate = RNA(n+1) + diphosphate. DNA-dependent RNA polymerase catalyzes the transcription of DNA into RNA using the four ribonucleoside triphosphates as substrates. The sequence is that of DNA-directed RNA polymerase subunit beta from Silene latifolia (White campion).